Consider the following 297-residue polypeptide: Tyrosine recombinase XerD (297 aa).

Residues 1 to 86 (MNDLIEDFLH…SLRSFFHYLM (86 aa)) enclose the Core-binding (CB) domain. Residues 107-291 (GLPKVLNLDD…TKLRLKDVYK (185 aa)) enclose the Tyr recombinase domain. Residues arginine 147, lysine 171, histidine 243, arginine 246, and histidine 269 contribute to the active site. Tyrosine 278 serves as the catalytic O-(3'-phospho-DNA)-tyrosine intermediate.

This sequence belongs to the 'phage' integrase family. XerD subfamily. Forms a cyclic heterotetrameric complex composed of two molecules of XerC and two molecules of XerD.

The protein localises to the cytoplasm. In terms of biological role, site-specific tyrosine recombinase, which acts by catalyzing the cutting and rejoining of the recombining DNA molecules. The XerC-XerD complex is essential to convert dimers of the bacterial chromosome into monomers to permit their segregation at cell division. It also contributes to the segregational stability of plasmids. The chain is Tyrosine recombinase XerD from Listeria monocytogenes serotype 4b (strain F2365).